The following is a 183-amino-acid chain: ATP synthase subunit delta (183 aa).

The protein belongs to the ATPase delta chain family. As to quaternary structure, F-type ATPases have 2 components, F(1) - the catalytic core - and F(0) - the membrane proton channel. F(1) has five subunits: alpha(3), beta(3), gamma(1), delta(1), epsilon(1). F(0) has three main subunits: a(1), b(2) and c(10-14). The alpha and beta chains form an alternating ring which encloses part of the gamma chain. F(1) is attached to F(0) by a central stalk formed by the gamma and epsilon chains, while a peripheral stalk is formed by the delta and b chains.

The protein resides in the cell inner membrane. Functionally, f(1)F(0) ATP synthase produces ATP from ADP in the presence of a proton or sodium gradient. F-type ATPases consist of two structural domains, F(1) containing the extramembraneous catalytic core and F(0) containing the membrane proton channel, linked together by a central stalk and a peripheral stalk. During catalysis, ATP synthesis in the catalytic domain of F(1) is coupled via a rotary mechanism of the central stalk subunits to proton translocation. This protein is part of the stalk that links CF(0) to CF(1). It either transmits conformational changes from CF(0) to CF(1) or is implicated in proton conduction. This Maridesulfovibrio salexigens (strain ATCC 14822 / DSM 2638 / NCIMB 8403 / VKM B-1763) (Desulfovibrio salexigens) protein is ATP synthase subunit delta.